A 292-amino-acid polypeptide reads, in one-letter code: Elongation factor Ts (292 aa).

The segment at 80–83 (TDFV) is involved in Mg(2+) ion dislocation from EF-Tu.

This sequence belongs to the EF-Ts family.

It is found in the cytoplasm. Functionally, associates with the EF-Tu.GDP complex and induces the exchange of GDP to GTP. It remains bound to the aminoacyl-tRNA.EF-Tu.GTP complex up to the GTP hydrolysis stage on the ribosome. The chain is Elongation factor Ts from Cupriavidus necator (strain ATCC 17699 / DSM 428 / KCTC 22496 / NCIMB 10442 / H16 / Stanier 337) (Ralstonia eutropha).